We begin with the raw amino-acid sequence, 714 residues long: MAETQVLLETYQGQGNNNATNIEATKAAIKKMLVRIERFQTRVRKHIDENYVDFMPNHTSPDIFLEKSSALGDEISDLLATVGNEGLSVLSDASVELAALSRDLREKLFGLRVSEHILKLDDLFQCVEEAKSTKDCLVVLDLMGRLRSLIYGEGTSDDISPDVERIFQSLECYESIKVKYHVQAHLLQQNLQERFDRLVQLSCKSFPTSKCVTLLISKDEALLQDIVIALFQESYNPTKLCAFLLENCIEPLIQKPVSVEYNVNAKDGTHIQLTLSYSIKEPDTSSLLRPNYKDVFEHFRLLLKTLCGINSSLNGTQHVFTVIGDHVKERMLQLLLDECLIRVPETMDEYNSSTLCEDVAEFEHQLVDTFLINPELDTTLTEFTKQFDTYYRNRLSERVLATAREIIQRDLQDMTLVAPSNLSANVASDPLLFPRCMVSKSAQVDFVKLMERVVRQPDKAAEGTPDPLGGVIGLLLDAYINEVPKVHKKLLKSIPQQSALFYNNCMYLTHWVAQHTKDNIDGFPSLVKILQSTGNKHLRVQVSYQESILMDIMSSFEFENPHTLGTAPLRLVRQCLRQLELLKNVWQQVPAENVYNNSFCELLQAFINELVQRVFSLRDISATMASELSDLIDVVLEKASILFHDKNDVVHVRSWLKLQQLKIMMNASLKEFSELWCDGVGPLTANYHADEIKHLIRALFQDTDRRAKAITQIV.

This sequence belongs to the ZW10 family.

It localises to the cytoplasm. Its subcellular location is the nucleus. The protein localises to the chromosome. It is found in the centromere. The protein resides in the kinetochore. Required for accurate chromosome segregation. The protein is Centromere/kinetochore protein zw10 (mit(1)15) of Drosophila grimshawi (Hawaiian fruit fly).